The primary structure comprises 438 residues: 26S proteasome regulatory subunit 7 homolog (438 aa).

Basic and acidic residues predominate over residues 1–15 (MPPKEDWEKYQKPVD). A disordered region spans residues 1 to 31 (MPPKEDWEKYQKPVDTEEENDKNPPPLDEGD). A Phosphoserine modification is found at serine 90. Position 220–227 (220–227 (GPPGTGKT)) interacts with ATP.

It belongs to the AAA ATPase family.

The protein localises to the cytoplasm. It is found in the nucleus. Its function is as follows. The 26S proteasome is involved in the ATP-dependent degradation of ubiquitinated proteins. The regulatory (or ATPase) complex confers ATP dependency and substrate specificity to the 26S complex. This chain is 26S proteasome regulatory subunit 7 homolog (rpt1), found in Schizosaccharomyces pombe (strain 972 / ATCC 24843) (Fission yeast).